We begin with the raw amino-acid sequence, 352 residues long: MSLYCGIACRRKFFWCYRLLSTYVTKTRYLFELKEDDDACKKAQQTGAFYLFHSLAPLLQTSAHQYLAPRHSLLELERLLGKFGQDAQRIEDSVLIGCSEQQEAWFALDLGLDSSFSISASLHKPEMETELKGSFIELRKALFQLNARDASLLSTAQALLRWHDAHQFCSRSGQPTKKNVAGSKRVCPSNNIIYYPQMAPVAITLVSDGTRCLLARQSSFPKGMYSALAGFCDIGESVEETIRREVAEEVGLEVESLQYYASQHWPFPSGSLMIACHATVKPGQTEIQVNLRELETAAWFSHDEVATALKRKGPYTQQQNGTFPFWLPPKLAISHQLIKEWVEKQTCSSLPA.

The N-terminal 20 residues, 1-20 (MSLYCGIACRRKFFWCYRLL), are a transit peptide targeting the mitochondrion. One can recognise a Nudix hydrolase domain in the interval 196–323 (PQMAPVAITL…PYTQQQNGTF (128 aa)). The Nudix box motif lies at 216-240 (RQSSFPKGMYSALAGFCDIGESVEE).

Belongs to the Nudix hydrolase family. Mg(2+) is required as a cofactor. The cofactor is Mn(2+). As to expression, highly expressed in metastasis-suppressed chromosome 6 melanoma hybrids.

The protein resides in the mitochondrion. It carries out the reaction NADH + H2O = reduced beta-nicotinamide D-ribonucleotide + AMP + 2 H(+). The enzyme catalyses NAD(+) + H2O = beta-nicotinamide D-ribonucleotide + AMP + 2 H(+). The catalysed reaction is NADPH + H2O = reduced beta-nicotinamide D-ribonucleotide + adenosine 2',5'-bisphosphate + 2 H(+). Functionally, NAD(P)H pyrophosphatase that hydrolyzes NADH into NMNH and AMP, and NADPH into NMNH and 2',5'-ADP. Has a marked preference for the reduced pyridine nucleotides. Does not show activity toward NAD-capped RNAs; the NAD-cap is an atypical cap present at the 5'-end of some RNAs. The chain is NAD(P)H pyrophosphatase NUDT13, mitochondrial from Homo sapiens (Human).